A 729-amino-acid polypeptide reads, in one-letter code: E3 ubiquitin-protein ligase Trim36 (729 aa).

The RING-type; degenerate zinc finger occupies 33–84 (CPACKELFTHPLILPCQHSVCHKCVKELLLSLDDSFNDVASDSSNQSSPRLR). 2 consecutive B box-type zinc fingers follow at residues 154-192 (AIMC…WGTV) and 207-249 (PKVL…VTTM). Positions 212, 215, 235, and 241 each coordinate Zn(2+). Residues 271 to 302 (ESQVKSQISELNLLMKETECNGERAKEEALAH) adopt a coiled-coil conformation. The COS domain maps to 356-413 (LKETDQSCFVQTAKQLHLRIQKATESLKSFRPAAQASFEDYVVNISKQTEVLGELSFF). In terms of domain architecture, Fibronectin type-III spans 416 to 511 (GIDIPEINEE…RELILHTPPA (96 aa)). A B30.2/SPRY domain is found at 509-723 (PPAPVFSFLF…LEEAITAKYL (215 aa)). The interval 606–626 (RDAASPRYEQDSGHDSGSEDA) is disordered. Residues 613–622 (YEQDSGHDSG) show a composition bias toward basic and acidic residues.

Belongs to the TRIM/RBCC family. In terms of assembly, interacts with CENPH. In terms of tissue distribution, expressed in testis. Strongly expressed in the neural tube region in 14.5 dpc embryos.

The protein resides in the cytoplasm. The protein localises to the cytoplasmic vesicle. Its subcellular location is the secretory vesicle. It is found in the acrosome. It localises to the cytoskeleton. The enzyme catalyses S-ubiquitinyl-[E2 ubiquitin-conjugating enzyme]-L-cysteine + [acceptor protein]-L-lysine = [E2 ubiquitin-conjugating enzyme]-L-cysteine + N(6)-ubiquitinyl-[acceptor protein]-L-lysine.. In terms of biological role, E3 ubiquitin-protein ligase which mediates ubiquitination and subsequent proteasomal degradation of target proteins. Involved in chromosome segregation and cell cycle regulation. May play a role in the acrosome reaction and fertilization. This Mus musculus (Mouse) protein is E3 ubiquitin-protein ligase Trim36 (Trim36).